A 149-amino-acid polypeptide reads, in one-letter code: Calmodulin (149 aa).

Residue A2 is modified to N-acetylalanine. EF-hand domains are found at residues 8–43 (EQIA…LGQN), 44–79 (PTEA…KMKD), 81–116 (DSEE…LGEK), and 117–149 (LTDE…MTAK). Positions 21, 23, 25, 27, 32, 57, 59, 61, 63, 68, 94, 96, 98, 100, and 105 each coordinate Ca(2+). K116 is subject to N6,N6,N6-trimethyllysine. Ca(2+) is bound by residues D130, D132, D134, Q136, and E141.

The protein belongs to the calmodulin family.

Calmodulin acts as part of a calcium signal transduction pathway by mediating the control of a large number of enzymes, ion channels, aquaporins and other proteins through calcium-binding. Calcium-binding is required for the activation of calmodulin. Among the enzymes to be stimulated by the calmodulin-calcium complex are a number of protein kinases, such as myosin light-chain kinases and calmodulin-dependent protein kinase type II (CaMK2), and phosphatases. The sequence is that of Calmodulin (calm) from Epinephelus akaara (Hong Kong grouper).